The sequence spans 289 residues: 4-diphosphocytidyl-2-C-methyl-D-erythritol kinase (289 aa).

The active site involves Lys10. ATP is bound at residue 94 to 104 (PVAAGLAGGSS). Asp136 is an active-site residue.

Belongs to the GHMP kinase family. IspE subfamily.

It catalyses the reaction 4-CDP-2-C-methyl-D-erythritol + ATP = 4-CDP-2-C-methyl-D-erythritol 2-phosphate + ADP + H(+). Its pathway is isoprenoid biosynthesis; isopentenyl diphosphate biosynthesis via DXP pathway; isopentenyl diphosphate from 1-deoxy-D-xylulose 5-phosphate: step 3/6. Catalyzes the phosphorylation of the position 2 hydroxy group of 4-diphosphocytidyl-2C-methyl-D-erythritol. This Bacillus mycoides (strain KBAB4) (Bacillus weihenstephanensis) protein is 4-diphosphocytidyl-2-C-methyl-D-erythritol kinase.